The following is a 221-amino-acid chain: MGQKVNPIGLRVGVIRTWDSRWYAKGQQYYENLHEDIRLRKFLKDKLKNAGVAKIEMERAAKKIKIIISTARPGVVIGKKGSGIDALKAEVQKLTPNEVFLSIQEVRKPDLDAQLVAESIAQQLEKRISWRRALKKSIAAAIKGGVRGIKIRVSGRLDGAEIARSEWYNEKSVPLHTLRADIDYGTAESLTAYGIIGLKVWIYKGDILSAREVEEAGRVKS.

One can recognise a KH type-2 domain in the interval 39 to 107 (LRKFLKDKLK…EVFLSIQEVR (69 aa)).

The protein belongs to the universal ribosomal protein uS3 family. As to quaternary structure, part of the 30S ribosomal subunit. Forms a tight complex with proteins S10 and S14.

Functionally, binds the lower part of the 30S subunit head. Binds mRNA in the 70S ribosome, positioning it for translation. This Bdellovibrio bacteriovorus (strain ATCC 15356 / DSM 50701 / NCIMB 9529 / HD100) protein is Small ribosomal subunit protein uS3.